The chain runs to 89 residues: Small ribosomal subunit protein uS15 (89 aa).

Belongs to the universal ribosomal protein uS15 family. In terms of assembly, part of the 30S ribosomal subunit. Forms a bridge to the 50S subunit in the 70S ribosome, contacting the 23S rRNA.

Its function is as follows. One of the primary rRNA binding proteins, it binds directly to 16S rRNA where it helps nucleate assembly of the platform of the 30S subunit by binding and bridging several RNA helices of the 16S rRNA. Forms an intersubunit bridge (bridge B4) with the 23S rRNA of the 50S subunit in the ribosome. This Streptococcus gordonii (strain Challis / ATCC 35105 / BCRC 15272 / CH1 / DL1 / V288) protein is Small ribosomal subunit protein uS15.